Consider the following 590-residue polypeptide: MLSKQIIGSEKTGRFALLDSIVRHGVIHIFGYPGGAILPIYDELYAWEELSLIKNILVRHEQGASHAADAYSRSTGKVGVCFATSGPGATNLVSGIATAHIDSVPILAITGQVGRPFIGTDAFQEVDIFGITLPIVKHSYVVRDPRDMSRIVAEAFYICKHGRPGPVLIDVPKDVGLEKFNYFSVEPGQVKIPGCRPLSNLKSRQILMAAKMIQQSSQPLLYIGGGAIISDAHSIIKELVDLYKIPVTTTLMGKGIFNEDSEFCLGMLGMHGTAYANFAVSECDLLIALGARFDDRVTGKLDEFACNAQVIHVDIDPAEVGKNRIPQVAIVGDVTEVVTSLLNLLKNNFKPYPEQIISWQERIHRWRQQYPLLVPKKSTSISPQEILVTTNQLAQDAYFTTDVGQHQMWSAQFLKVKSKHWISSAGLGTMGYGLPAAIGAQVAHPNELVICVSGDSSFQMNMQELGTIAQYKLPIKIVIINNRWQGMVRQWQQAFYGERYSHSRMTEGAPNFQKLAEAFGIKAFTVNNRQNMESSLKDAMKYPGPVLLDCQVTENENCYPMVAPGKSNAQMIGIAKPQRGTASNYVSRNI.

Thiamine diphosphate is bound at residue Glu61. Residues Arg163, 271 to 292, and 314 to 333 each bind FAD; these read HGTA…LGAR and DIDP…IVGD. A thiamine pyrophosphate binding region spans residues 405–484; that stretch reads QHQMWSAQFL…IKIVIINNRW (80 aa). Mg(2+)-binding residues include Asp455 and Asn482.

It belongs to the TPP enzyme family. In terms of assembly, dimer of large and small chains. It depends on Mg(2+) as a cofactor. Requires thiamine diphosphate as cofactor.

Its subcellular location is the plastid. The protein resides in the chloroplast. It catalyses the reaction 2 pyruvate + H(+) = (2S)-2-acetolactate + CO2. It functions in the pathway amino-acid biosynthesis; L-isoleucine biosynthesis; L-isoleucine from 2-oxobutanoate: step 1/4. It participates in amino-acid biosynthesis; L-valine biosynthesis; L-valine from pyruvate: step 1/4. The protein is Acetolactate synthase large subunit (ilvB) of Porphyra purpurea (Red seaweed).